The chain runs to 425 residues: Glutamate-1-semialdehyde 2,1-aminomutase (425 aa).

Lys-266 is modified (N6-(pyridoxal phosphate)lysine).

This sequence belongs to the class-III pyridoxal-phosphate-dependent aminotransferase family. HemL subfamily. As to quaternary structure, homodimer. Pyridoxal 5'-phosphate is required as a cofactor.

It localises to the cytoplasm. The enzyme catalyses (S)-4-amino-5-oxopentanoate = 5-aminolevulinate. Its pathway is porphyrin-containing compound metabolism; protoporphyrin-IX biosynthesis; 5-aminolevulinate from L-glutamyl-tRNA(Glu): step 2/2. This chain is Glutamate-1-semialdehyde 2,1-aminomutase, found in Nitratidesulfovibrio vulgaris (strain DSM 19637 / Miyazaki F) (Desulfovibrio vulgaris).